The sequence spans 252 residues: MKTVTVKDLVIGTGAPKIIVSLMAKDIARVKSEALAYREADFDILEWRVDHFADLSNVESVMAAAKILRETMPEKPLLFTFRSAKEGGEQAISTEAYIALNRAAIDSGLVDMIDLELFTGDDQVKETVAYAHAHDVKVVMSNHDFHKTPEAEEIIARLRKMQSFDADIPKIALMPQSTSDVLTLLTATLEMQEQYADRPIITMSMAKTGVISRLAGEVFGSAATFGAVKKASAPGQISVNDLRTVLTILHQA.

Residues S21, 46 to 48, and R82 each bind 3-dehydroquinate; that span reads EWR. H143 serves as the catalytic Proton donor/acceptor. Residue K170 is the Schiff-base intermediate with substrate of the active site. 3 residues coordinate 3-dehydroquinate: R213, S232, and Q236.

It belongs to the type-I 3-dehydroquinase family. Homodimer.

It carries out the reaction 3-dehydroquinate = 3-dehydroshikimate + H2O. The protein operates within metabolic intermediate biosynthesis; chorismate biosynthesis; chorismate from D-erythrose 4-phosphate and phosphoenolpyruvate: step 3/7. Involved in the third step of the chorismate pathway, which leads to the biosynthesis of aromatic amino acids. Catalyzes the cis-dehydration of 3-dehydroquinate (DHQ) and introduces the first double bond of the aromatic ring to yield 3-dehydroshikimate. In Escherichia coli (strain SE11), this protein is 3-dehydroquinate dehydratase.